We begin with the raw amino-acid sequence, 140 residues long: Nucleoside diphosphate kinase (140 aa).

Residues Lys-11, Phe-59, Arg-87, Thr-93, Arg-104, and Asn-114 each coordinate ATP. Residue His-117 is the Pros-phosphohistidine intermediate of the active site.

It belongs to the NDK family. In terms of assembly, homotetramer. The cofactor is Mg(2+).

The protein localises to the cytoplasm. It catalyses the reaction a 2'-deoxyribonucleoside 5'-diphosphate + ATP = a 2'-deoxyribonucleoside 5'-triphosphate + ADP. It carries out the reaction a ribonucleoside 5'-diphosphate + ATP = a ribonucleoside 5'-triphosphate + ADP. In terms of biological role, major role in the synthesis of nucleoside triphosphates other than ATP. The ATP gamma phosphate is transferred to the NDP beta phosphate via a ping-pong mechanism, using a phosphorylated active-site intermediate. This chain is Nucleoside diphosphate kinase, found in Rhizobium meliloti (strain 1021) (Ensifer meliloti).